Reading from the N-terminus, the 314-residue chain is Hydroxyethylthiazole kinase (314 aa).

Positions 1 to 13 (MSNSASSFADVSS) are enriched in low complexity. Residues 1–24 (MSNSASSFADVSSGCTAGTPVPAD) are disordered. Met70 contacts substrate. Residues Arg145 and Ser217 each coordinate ATP. Residue Gly244 participates in substrate binding.

The protein belongs to the Thz kinase family. Mg(2+) is required as a cofactor.

It catalyses the reaction 5-(2-hydroxyethyl)-4-methylthiazole + ATP = 4-methyl-5-(2-phosphooxyethyl)-thiazole + ADP + H(+). It functions in the pathway cofactor biosynthesis; thiamine diphosphate biosynthesis; 4-methyl-5-(2-phosphoethyl)-thiazole from 5-(2-hydroxyethyl)-4-methylthiazole: step 1/1. In terms of biological role, catalyzes the phosphorylation of the hydroxyl group of 4-methyl-5-beta-hydroxyethylthiazole (THZ). In Bifidobacterium longum subsp. infantis (strain ATCC 15697 / DSM 20088 / JCM 1222 / NCTC 11817 / S12), this protein is Hydroxyethylthiazole kinase.